Reading from the N-terminus, the 158-residue chain is NAD(P)H-quinone oxidoreductase subunit N (158 aa).

It belongs to the complex I NdhN subunit family. In terms of assembly, NDH-1 can be composed of about 15 different subunits; different subcomplexes with different compositions have been identified which probably have different functions.

The protein localises to the cellular thylakoid membrane. It carries out the reaction a plastoquinone + NADH + (n+1) H(+)(in) = a plastoquinol + NAD(+) + n H(+)(out). It catalyses the reaction a plastoquinone + NADPH + (n+1) H(+)(in) = a plastoquinol + NADP(+) + n H(+)(out). Functionally, NDH-1 shuttles electrons from an unknown electron donor, via FMN and iron-sulfur (Fe-S) centers, to quinones in the respiratory and/or the photosynthetic chain. The immediate electron acceptor for the enzyme in this species is believed to be plastoquinone. Couples the redox reaction to proton translocation, and thus conserves the redox energy in a proton gradient. Cyanobacterial NDH-1 also plays a role in inorganic carbon-concentration. This is NAD(P)H-quinone oxidoreductase subunit N from Microcystis aeruginosa (strain NIES-843 / IAM M-2473).